We begin with the raw amino-acid sequence, 91 residues long: uncharacterized protein (91 aa).

3 helical membrane passes run 6–26 (AAAVFSITIPIISAILIINFF), 37–57 (MPVFFPLLLSPIGIILAFVSI), and 68–88 (IVLNAIMFPFPFFWFIGGALL).

The protein localises to the cell membrane. This is an uncharacterized protein from Bacillus subtilis (strain 168).